Reading from the N-terminus, the 344-residue chain is uncharacterized protein (344 aa).

A signal peptide spans methionine 1–alanine 27. Residues glycine 29–lysine 344 enclose the GH18 domain. Glutamate 140 (proton donor) is an active-site residue.

The protein belongs to the glycosyl hydrolase 18 family.

This is an uncharacterized protein from Bacillus subtilis (strain 168).